Consider the following 243-residue polypeptide: Protein canopy homolog 3 (243 aa).

Positions 1–15 are cleaved as a signal peptide; sequence MWFLFLLLPLWAGCA. A Saposin B-type domain is found at 27 to 236; sequence SKCEVCKYVA…KEEKKQMDQP (210 aa). Disulfide bonds link C29–C188, C32–C176, and C86–C148. Residues 136-160 adopt a coiled-coil conformation; that stretch reads ETSAEVADMKKQCDVMMENYEEVIE. The disordered stretch occupies residues 186 to 243; that stretch reads QSCLSEQGDSRKGDTGPSTGTKKQKKQGEKKNKSKKQNSGSKEEKKQMDQPMAAKEEL. Over residues 226-243 the composition is skewed to basic and acidic residues; that stretch reads SKEEKKQMDQPMAAKEEL.

Belongs to the canopy family.

It localises to the endoplasmic reticulum. In terms of biological role, toll-like receptor (TLR)-specific co-chaperone for HSP90B1. Required for proper TLR folding and hence controls TLR exit from the endoplasmic reticulum. Consequently, required for immune responses. This Xenopus laevis (African clawed frog) protein is Protein canopy homolog 3 (cnpy3).